The chain runs to 102 residues: Large ribosomal subunit protein uL24 (102 aa).

This sequence belongs to the universal ribosomal protein uL24 family. Part of the 50S ribosomal subunit.

One of two assembly initiator proteins, it binds directly to the 5'-end of the 23S rRNA, where it nucleates assembly of the 50S subunit. Its function is as follows. One of the proteins that surrounds the polypeptide exit tunnel on the outside of the subunit. The chain is Large ribosomal subunit protein uL24 from Alkaliphilus oremlandii (strain OhILAs) (Clostridium oremlandii (strain OhILAs)).